Here is a 397-residue protein sequence, read N- to C-terminus: Tryptophan synthase beta chain (397 aa).

An N6-(pyridoxal phosphate)lysine modification is found at lysine 90.

It belongs to the TrpB family. Tetramer of two alpha and two beta chains. It depends on pyridoxal 5'-phosphate as a cofactor.

It catalyses the reaction (1S,2R)-1-C-(indol-3-yl)glycerol 3-phosphate + L-serine = D-glyceraldehyde 3-phosphate + L-tryptophan + H2O. Its pathway is amino-acid biosynthesis; L-tryptophan biosynthesis; L-tryptophan from chorismate: step 5/5. The beta subunit is responsible for the synthesis of L-tryptophan from indole and L-serine. In Nitrosomonas europaea (strain ATCC 19718 / CIP 103999 / KCTC 2705 / NBRC 14298), this protein is Tryptophan synthase beta chain.